A 661-amino-acid chain; its full sequence is Vasorin (661 aa).

The signal sequence occupies residues 1–19 (MWHLLVWIILLATAQQMIT). The region spanning 20-50 (EGCPAGCQCNTPQTVFCLARKNSNFPRSVPP) is the LRRNT domain. The Extracellular segment spans residues 20–563 (EGCPAGCQCN…VTQSQEGNLT (544 aa)). LRR repeat units follow at residues 52-72 (TLNLYVFENGISSIEESSFIG), 75-96 (GLHLLDLSHNQLSSLPGGVFRN), 99-120 (NLSNLDLTSNQLTEISADTFQG), 123-144 (RLERLYLNGNRIRSIHPEAFKG), 147-168 (SLLELKLSNNQLVTPPAFSLPH), 169-189 (LLLLDLSYNAIPVIQQGVFNA), 191-212 (NIESLRLAGLGLKEVPEELLSG), 215-237 (NLHELDLSDNQLDKVPPGLHGLT), 238-258 (KLNIAGNVGFSQIQVDDLSNL), and 259-281 (PALQELDLSGLSLQTLPKGLFRS). N99 carries an N-linked (GlcNAc...) asparagine glycan. The region spanning 293–346 (NPFNCVCSLGWLSEWMRVSGVVLLRPDETRCHFPPKNAGKTLRQLRDSEYGCPA) is the LRRCT domain. The segment covering 348-385 (TTIQMPSTMPPSTTTGPPTTTKHLQTEAPTTASTTTTT) has biased composition (low complexity). Positions 348–395 (TTIQMPSTMPPSTTTGPPTTTKHLQTEAPTTASTTTTTIPHQEQEEDT) are disordered. Residues 403 to 440 (EDTLCPPQTCLNGGSCHLDPTGQLECECPPGFQGTYCE) enclose the EGF-like domain. 3 disulfide bridges follow: C407-C418, C412-C428, and C430-C439. Residues 455–543 (EQVKIIEVTV…EEDLCTETHT (89 aa)) form the Fibronectin type-III domain. N-linked (GlcNAc...) asparagine glycosylation is found at N518 and N561. The chain crosses the membrane as a helical span at residues 564–584 (LVLVPAVAAGILLSAAVAAAA). At 585-661 (CYARRRKGKG…PTGRLPHSYF (77 aa)) the chain is on the cytoplasmic side. The segment at 591–661 (KGKGHSVEDG…PTGRLPHSYF (71 aa)) is disordered. The span at 606–623 (DGVKKGLDGKGEVKKLSE) shows a compositional bias: basic and acidic residues.

It is found in the membrane. Functionally, may act as an inhibitor of TGF-beta signaling. The chain is Vasorin (vasn) from Xenopus tropicalis (Western clawed frog).